A 639-amino-acid polypeptide reads, in one-letter code: Protein artemis (639 aa).

3 disordered regions span residues 450–496 (MDCT…LTSS), 515–570 (SELE…SQVD), and 590–617 (EAAELKSDSQVSSDFELPPTPGSKVPQP). The segment covering 454–466 (ESNDDDDDEDDAA) has biased composition (acidic residues). Over residues 518 to 537 (ENSQNTQTLSTENTASQSPE) the composition is skewed to polar residues. Residues 548–560 (VHMSSSQSTHISD) show a composition bias toward low complexity.

This sequence belongs to the DNA repair metallo-beta-lactamase (DRMBL) family.

It is found in the nucleus. In terms of biological role, may have a role in the processing of DNA double strand breaks (DSBs) prior to their repair by the non homologous end joining (NHEJ) pathway. Probably exhibits both exonuclease and endonuclease activity. The sequence is that of Protein artemis (dclre1c) from Danio rerio (Zebrafish).